The sequence spans 567 residues: Interleukin-1 receptor-like 1 (567 aa).

An N-terminal signal peptide occupies residues 1–26; the sequence is MIDRQRMGLWALAILTLPMYLTVTEG. 2 Ig-like C2-type domains span residues 27–109 and 120–203; these read SKSS…LNVT and PDYL…VTAT. At 27 to 332 the chain is on the extracellular side; it reads SKSSWGLENE…LRRKQPIDHR (306 aa). A disulfide bridge connects residues cysteine 42 and cysteine 93. N-linked (GlcNAc...) asparagine glycosylation is found at asparagine 60, asparagine 101, asparagine 107, asparagine 146, asparagine 176, and asparagine 194. 2 disulfides stabilise this stretch: cysteine 117–cysteine 157 and cysteine 139–cysteine 187. The segment at 204 to 216 is flexible linker; sequence RSFTVEEKGFSMF. Residues 217-324 enclose the Ig-like C2-type 3 domain; that stretch reads PVITNPPYNH…GMIRHTIRLR (108 aa). N-linked (GlcNAc...) asparagine glycosylation is found at asparagine 225, asparagine 259, and asparagine 278. Disulfide bonds link cysteine 240–cysteine 308 and cysteine 243–cysteine 287. A Glycyl lysine isopeptide (Lys-Gly) (interchain with G-Cter in ubiquitin) cross-link involves residue lysine 326. The helical transmembrane segment at 333-355 threads the bilayer; sequence SIYYIVAGCSLLLMFINVLVIVL. Residues 356–567 are Cytoplasmic-facing; that stretch reads KVFWIEVALF…GKACLDLKHF (212 aa). Residues 380-540 form the TIR domain; that stretch reads KLYDAYIIYP…KFWKHVRYQM (161 aa). Serine 442 carries the post-translational modification Phosphoserine; by GSK3-beta. Glutamate 466 is an active-site residue.

The protein belongs to the interleukin-1 receptor family. In terms of assembly, interacts with MYD88, IRAK1, IRAK4, and TRAF6. Bound to its ligand IL33, interacts with IL1RAP to form the minimal interleukin-33 signaling complex with a 1:1:1 stoichiometry. Interacts with KIT (bound to KITLG/SCF). A mast cell-specific KITLG/SCF-induced interleukin-33 signaling complex contains IL1RL1, IL1RAP, KIT and MYD88. Interacts with TMED1. In terms of processing, phosphorylated by GSK3B at Ser-442; leading to proteasomal degradation. Post-translationally, ubiquitinated at Lys-326 in a FBXL19-mediated manner; leading to proteasomal degradation. Ubiquitination by TRAF6 via 'Lys-27'-linked polyubiquitination and deubiquitination by USP38 serves as a critical regulatory mechanism for fine-tuning IL1RL1-mediated inflammatory response. As to expression, predominantly expressed in hematopoietic tissues, and in macrophage, erythroid, epithelial and fibroblast cell lines. Isoform A is expressed in brain astrocytes and microglia. Isoform B is expressed in brain endothelial cells.

The protein localises to the cell membrane. Its subcellular location is the secreted. The catalysed reaction is NAD(+) + H2O = ADP-D-ribose + nicotinamide + H(+). In terms of biological role, receptor for interleukin-33 (IL-33) which plays crucial roles in innate and adaptive immunity, contributing to tissue homeostasis and responses to environmental stresses together with coreceptor IL1RAP. Its stimulation recruits MYD88, IRAK1, IRAK4, and TRAF6, followed by phosphorylation of MAPK3/ERK1 and/or MAPK1/ERK2, MAPK14, and MAPK8. Possibly involved in helper T-cell function. Upon tissue injury, induces UCP2-dependent mitochondrial rewiring that attenuates the generation of reactive oxygen species and preserves the integrity of Krebs cycle required for persistent production of itaconate and subsequent GATA3-dependent differentiation of inflammation-resolving alternatively activated macrophages. Inhibits IL-33 signaling. The polypeptide is Interleukin-1 receptor-like 1 (Il1rl1) (Mus musculus (Mouse)).